We begin with the raw amino-acid sequence, 761 residues long: Prolyl oligopeptidase A (761 aa).

Active-site charge relay system residues include Ser606, Asp690, and His726.

Belongs to the peptidase S9A family. Monomer.

The enzyme catalyses Hydrolysis of Pro-|-Xaa &gt;&gt; Ala-|-Xaa in oligopeptides.. In terms of biological role, housekeeping prolyl oligopeptidase (POP) that behaves like a conventional POP by cleaving peptide bonds on the C-terminal side of prolyl residues within peptides that are up to approximately 30 amino acids long. This is Prolyl oligopeptidase A from Amanita bisporigera (Destroying angel).